The primary structure comprises 654 residues: tRNA 5-methylaminomethyl-2-thiouridine biosynthesis bifunctional protein MnmC (654 aa).

Positions 1-236 are tRNA (mnm(5)s(2)U34)-methyltransferase; the sequence is MSTLLQHAQI…KWEVMHGVYT (236 aa). An FAD-dependent cmnm(5)s(2)U34 oxidoreductase region spans residues 262–654; that stretch reads IGAGLAGSAT…FALRRLIRGK (393 aa).

In the N-terminal section; belongs to the methyltransferase superfamily. tRNA (mnm(5)s(2)U34)-methyltransferase family. This sequence in the C-terminal section; belongs to the DAO family. The cofactor is FAD.

Its subcellular location is the cytoplasm. The catalysed reaction is 5-aminomethyl-2-thiouridine(34) in tRNA + S-adenosyl-L-methionine = 5-methylaminomethyl-2-thiouridine(34) in tRNA + S-adenosyl-L-homocysteine + H(+). In terms of biological role, catalyzes the last two steps in the biosynthesis of 5-methylaminomethyl-2-thiouridine (mnm(5)s(2)U) at the wobble position (U34) in tRNA. Catalyzes the FAD-dependent demodification of cmnm(5)s(2)U34 to nm(5)s(2)U34, followed by the transfer of a methyl group from S-adenosyl-L-methionine to nm(5)s(2)U34, to form mnm(5)s(2)U34. The chain is tRNA 5-methylaminomethyl-2-thiouridine biosynthesis bifunctional protein MnmC from Pseudomonas entomophila (strain L48).